A 268-amino-acid polypeptide reads, in one-letter code: Centromere protein Q (268 aa).

The interval Met-1–Thr-80 is disordered. A phosphoserine mark is found at Ser-31 and Ser-50. Positions Thr-58 to Thr-72 are enriched in basic residues. Residues Glu-170–Ser-206 are a coiled coil. A Phosphoserine modification is found at Ser-249.

It belongs to the CENP-Q/OKP1 family. In terms of assembly, component of the CENPA-CAD complex, composed of CENPI, CENPK, CENPL, CENPO, CENPP, CENPQ, CENPR and CENPS. The CENPA-CAD complex interacts with the CENPA-NAC complex, at least composed of CENPA, CENPC, CENPH, CENPM, CENPN, CENPT and CENPU. Post-translationally, phosphorylation at Ser-50 is essential for CENPE recruitment to kinetochores and orderly chromosome congression.

The protein localises to the nucleus. Its subcellular location is the chromosome. It localises to the centromere. Functionally, component of the CENPA-CAD (nucleosome distal) complex, a complex recruited to centromeres which is involved in assembly of kinetochore proteins, mitotic progression and chromosome segregation. May be involved in incorporation of newly synthesized CENPA into centromeres via its interaction with the CENPA-NAC complex. Plays an important role in chromosome congression and in the recruitment of CENP-O complex (which comprises CENPO, CENPP, CENPQ and CENPU), CENPE and PLK1 to the kinetochores. This Homo sapiens (Human) protein is Centromere protein Q (CENPQ).